The following is a 232-amino-acid chain: Large ribosomal subunit protein uL1 (232 aa).

It belongs to the universal ribosomal protein uL1 family. Part of the 50S ribosomal subunit.

Binds directly to 23S rRNA. The L1 stalk is quite mobile in the ribosome, and is involved in E site tRNA release. Functionally, protein L1 is also a translational repressor protein, it controls the translation of the L11 operon by binding to its mRNA. In Azobacteroides pseudotrichonymphae genomovar. CFP2, this protein is Large ribosomal subunit protein uL1.